Here is a 283-residue protein sequence, read N- to C-terminus: Thymidylate synthase (283 aa).

Arg-22 contributes to the dUMP binding site. The Nucleophile role is filled by Cys-160. Residues 180-183, Asn-191, and 221-223 contribute to the dUMP site; these read RSCD and HIY. Asp-183 lines the (6R)-5,10-methylene-5,6,7,8-tetrahydrofolate pocket. Ser-282 provides a ligand contact to (6R)-5,10-methylene-5,6,7,8-tetrahydrofolate.

Belongs to the thymidylate synthase family. Bacterial-type ThyA subfamily. Homodimer.

The protein resides in the cytoplasm. It catalyses the reaction dUMP + (6R)-5,10-methylene-5,6,7,8-tetrahydrofolate = 7,8-dihydrofolate + dTMP. It functions in the pathway pyrimidine metabolism; dTTP biosynthesis. Functionally, catalyzes the reductive methylation of 2'-deoxyuridine-5'-monophosphate (dUMP) to 2'-deoxythymidine-5'-monophosphate (dTMP) while utilizing 5,10-methylenetetrahydrofolate (mTHF) as the methyl donor and reductant in the reaction, yielding dihydrofolate (DHF) as a by-product. This enzymatic reaction provides an intracellular de novo source of dTMP, an essential precursor for DNA biosynthesis. This is Thymidylate synthase from Vibrio cholerae serotype O1 (strain ATCC 39315 / El Tor Inaba N16961).